The sequence spans 301 residues: Putative phosphoenolpyruvate synthase regulatory protein (301 aa).

Low complexity predominate over residues 1–24 (MSEPVAPDGAQPAPAGATPQPLQP). A disordered region spans residues 1 to 27 (MSEPVAPDGAQPAPAGATPQPLQPIAG). 181-188 (GVSRSGKT) is a binding site for ADP.

It belongs to the pyruvate, phosphate/water dikinase regulatory protein family. PSRP subfamily.

The enzyme catalyses [pyruvate, water dikinase] + ADP = [pyruvate, water dikinase]-phosphate + AMP + H(+). The catalysed reaction is [pyruvate, water dikinase]-phosphate + phosphate + H(+) = [pyruvate, water dikinase] + diphosphate. Bifunctional serine/threonine kinase and phosphorylase involved in the regulation of the phosphoenolpyruvate synthase (PEPS) by catalyzing its phosphorylation/dephosphorylation. This chain is Putative phosphoenolpyruvate synthase regulatory protein, found in Cupriavidus pinatubonensis (strain JMP 134 / LMG 1197) (Cupriavidus necator (strain JMP 134)).